We begin with the raw amino-acid sequence, 241 residues long: Probable transcriptional regulatory protein FMG_0893 (241 aa).

Belongs to the TACO1 family.

The protein resides in the cytoplasm. In Finegoldia magna (strain ATCC 29328 / DSM 20472 / WAL 2508) (Peptostreptococcus magnus), this protein is Probable transcriptional regulatory protein FMG_0893.